The following is a 576-amino-acid chain: uncharacterized protein (576 aa).

A signal peptide spans 1–28 (MLRLNGLRVLLRTLAAIGALLTTASASA). The active-site Acyl-ester intermediate is Ser-185. Intrachain disulfides connect Cys-252-Cys-269 and Cys-278-Cys-286. Ca(2+)-binding residues include Asp-253, Asp-256, Asp-260, and Val-262. Active-site charge relay system residues include Asp-414 and His-464. Cys-529 and Cys-551 are joined by a disulfide.

This sequence belongs to the tannase family.

This is an uncharacterized protein from Xanthomonas campestris pv. campestris (strain ATCC 33913 / DSM 3586 / NCPPB 528 / LMG 568 / P 25).